We begin with the raw amino-acid sequence, 338 residues long: E3 ubiquitin-protein ligase SPL1 (338 aa).

A helical membrane pass occupies residues 1–21; that stretch reads MIHLAGFTCCLGGVALYLLTR. Topologically, residues 22 to 223 are chloroplast intermembrane; sequence STGRDIKSIT…KLGDLSRRFK (202 aa). A helical transmembrane segment spans residues 224 to 246; it reads YASMGLTVLGVILISKPVIEYIL. Over 247-338 the chain is Cytoplasmic; it reads KRIEDTLERR…IQQVLKIYRH (92 aa). An RING-type zinc finger spans residues 291–326; it reads CVVCLDQKYNTAFVECGHMCCCTPCSLQLRTCPLCR.

It is found in the plastid. Its subcellular location is the chloroplast outer membrane. It catalyses the reaction S-ubiquitinyl-[E2 ubiquitin-conjugating enzyme]-L-cysteine + [acceptor protein]-L-lysine = [E2 ubiquitin-conjugating enzyme]-L-cysteine + N(6)-ubiquitinyl-[acceptor protein]-L-lysine.. The protein operates within protein modification; protein ubiquitination. Possesses E3 ubiquitin-protein ligase activity. This Arabidopsis thaliana (Mouse-ear cress) protein is E3 ubiquitin-protein ligase SPL1.